We begin with the raw amino-acid sequence, 49 residues long: Large ribosomal subunit protein bL33 (49 aa).

This sequence belongs to the bacterial ribosomal protein bL33 family.

In Syntrophus aciditrophicus (strain SB), this protein is Large ribosomal subunit protein bL33.